The sequence spans 90 residues: Probable Fe(2+)-trafficking protein (90 aa).

The protein belongs to the Fe(2+)-trafficking protein family.

Functionally, could be a mediator in iron transactions between iron acquisition and iron-requiring processes, such as synthesis and/or repair of Fe-S clusters in biosynthetic enzymes. The sequence is that of Probable Fe(2+)-trafficking protein from Ectopseudomonas mendocina (strain ymp) (Pseudomonas mendocina).